A 500-amino-acid polypeptide reads, in one-letter code: Cytochrome P450 726A27 (500 aa).

A helical; Signal-anchor for type II membrane protein transmembrane segment spans residues 7–27; the sequence is IPSYPIIFSFFIFIFMLIKIW. Cys440 is a binding site for heme.

This sequence belongs to the cytochrome P450 family. Heme is required as a cofactor. In terms of tissue distribution, expressed in mature seeds.

It is found in the membrane. The catalysed reaction is (-)-casbene + reduced [NADPH--hemoprotein reductase] + O2 = 4-hydroxycasbene + oxidized [NADPH--hemoprotein reductase] + H2O + H(+). It catalyses the reaction 8-hydroxycasbene + reduced [NADPH--hemoprotein reductase] + O2 = 4,8-dihydroxycasbene + oxidized [NADPH--hemoprotein reductase] + H2O + H(+). The enzyme catalyses 4,8-dihydroxycasbene + reduced [NADPH--hemoprotein reductase] + O2 = 4,5,8-trihydroxycasbene + oxidized [NADPH--hemoprotein reductase] + H2O + H(+). It participates in secondary metabolite biosynthesis; terpenoid biosynthesis. In terms of biological role, involved in the biosynthesis of macrocyclic lathyrane type diterpenoids (also called Euphorbia factors) natural products, including the cyclization route from casbene to jolkinol C, a precursor for ingenol mebutate that is used to treat actinic keratosis, a precancerous skin condition. Catalyzes the hydroxylation of (-)-casbene and 8-hydroxycasbene to produce 4-hydroxycasbene and 4,8-dihydroxycasbene, respectively. The sequence is that of Cytochrome P450 726A27 from Euphorbia lathyris (Caper spurge).